The primary structure comprises 1124 residues: Probable leucine-rich repeat receptor-like protein kinase At2g33170 (1124 aa).

Positions 1–32 are cleaved as a signal peptide; sequence MGWWIFEFKKESKSMFVGVLFLLTLLVWTSES. Over 33–752 the chain is Extracellular; that stretch reads LNSDGQFLLE…LKAGSARRGR (720 aa). Asparagine 72, asparagine 96, and asparagine 131 each carry an N-linked (GlcNAc...) asparagine glycan. LRR repeat units follow at residues 86–109, 110–132, 134–156, 158–180, 182–205, 206–228, 230–252, 254–277, 278–300, 302–325, 326–348, 350–371, 374–397, 398–420, 422–444, 446–468, 470–491, 494–516, 518–540, 542–564, 566–588, 590–613, 614–636, 638–661, 663–686, and 687–709; these read VVTS…GGLV, NLVY…IGNC, KLEV…INKL, QLRS…IGDL, NLEE…GNLN, KLTT…IGKC, NLKL…IGML, KLQE…GNLT, SLET…IGNM, SLKK…GKLS, KVME…LSKI, ELRL…ELSK, NLAK…QNLT, SMRQ…LGLY, PLWV…ICQQ, NLIL…VLRC, SLLQ…ELCK, NLSA…IGTC, KLQR…ISKL, NLVT…IANC, MLQR…LGSL, QLEI…GNLT, HLTE…LGLL, SLQI…IGNL, LLMY…ENLS, and SLLG…QIFQ. Asparagine 192 is a glycosylation site (N-linked (GlcNAc...) asparagine). The N-linked (GlcNAc...) asparagine glycan is linked to asparagine 275. N-linked (GlcNAc...) asparagine glycosylation is present at asparagine 314. An N-linked (GlcNAc...) asparagine glycan is attached at asparagine 395. Asparagine 494 carries N-linked (GlcNAc...) asparagine glycosylation. Asparagine 547 carries an N-linked (GlcNAc...) asparagine glycan. An N-linked (GlcNAc...) asparagine glycan is attached at asparagine 611. Residues asparagine 644, asparagine 684, asparagine 692, asparagine 697, and asparagine 710 are each glycosylated (N-linked (GlcNAc...) asparagine). Residues 753-773 traverse the membrane as a helical segment; that stretch reads IIIIVSSVIGGISLLLIAIVV. The Cytoplasmic portion of the chain corresponds to 774–1124; that stretch reads HFLRNPVEPT…CSDLPPPAPP (351 aa). 2 positions are modified to phosphothreonine: threonine 808 and threonine 816. One can recognise a Protein kinase domain in the interval 819–1100; it reads FHDSYIVGRG…TMREVVLMLI (282 aa). ATP-binding positions include 825 to 833 and lysine 847; that span reads VGRGACGTV. Residues tyrosine 901 and tyrosine 939 each carry the phosphotyrosine modification. Aspartate 952 serves as the catalytic Proton acceptor. Serine 986 carries the post-translational modification Phosphoserine. Phosphotyrosine occurs at positions 994 and 1001. At threonine 1002 the chain carries Phosphothreonine.

It belongs to the protein kinase superfamily. Ser/Thr protein kinase family.

The protein localises to the membrane. The enzyme catalyses L-seryl-[protein] + ATP = O-phospho-L-seryl-[protein] + ADP + H(+). It catalyses the reaction L-threonyl-[protein] + ATP = O-phospho-L-threonyl-[protein] + ADP + H(+). In Arabidopsis thaliana (Mouse-ear cress), this protein is Probable leucine-rich repeat receptor-like protein kinase At2g33170.